The sequence spans 242 residues: uncharacterized protein (242 aa).

One can recognise a Response regulatory domain in the interval 3–116 (TALVIDDEPF…RLRKTVKRLS (114 aa)). Asp-54 carries the post-translational modification 4-aspartylphosphate. In terms of domain architecture, HTH LytTR-type spans 139 to 240 (IPCIGHNRIV…LKLLKEMLGL (102 aa)).

This is an uncharacterized protein from Vibrio vulnificus (strain CMCP6).